A 336-amino-acid chain; its full sequence is Fructokinase-2 (336 aa).

This sequence belongs to the carbohydrate kinase PfkB family. Expressed in stem, sheaths, anthers, and panicles (at protein level).

It catalyses the reaction D-fructose + ATP = D-fructose 6-phosphate + ADP + H(+). It functions in the pathway glycan biosynthesis; starch biosynthesis. With respect to regulation, strongly inhibited at high fructose concentration. In terms of biological role, may play an important role in maintaining the flux of carbon towards starch formation in endosperm. May also be involved in a sugar-sensing pathway. In Oryza sativa subsp. japonica (Rice), this protein is Fructokinase-2 (FRK2).